The chain runs to 296 residues: Polyamine aminopropyltransferase (296 aa).

Residues 5 to 238 enclose the PABS domain; it reads ELWYETLHAN…GIMTFAWATQ (234 aa). Position 33 (glutamine 33) interacts with S-methyl-5'-thioadenosine. Spermidine is bound by residues histidine 64 and aspartate 88. Residues glutamate 108 and 140-141 each bind S-methyl-5'-thioadenosine; that span reads DG. The Proton acceptor role is filled by aspartate 158. 158–161 is a spermidine binding site; that stretch reads DCTD. Proline 165 lines the S-methyl-5'-thioadenosine pocket.

It belongs to the spermidine/spermine synthase family. Homodimer or homotetramer.

The protein resides in the cytoplasm. The enzyme catalyses S-adenosyl 3-(methylsulfanyl)propylamine + putrescine = S-methyl-5'-thioadenosine + spermidine + H(+). It participates in amine and polyamine biosynthesis; spermidine biosynthesis; spermidine from putrescine: step 1/1. Its function is as follows. Catalyzes the irreversible transfer of a propylamine group from the amino donor S-adenosylmethioninamine (decarboxy-AdoMet) to putrescine (1,4-diaminobutane) to yield spermidine. In Yersinia pseudotuberculosis serotype O:1b (strain IP 31758), this protein is Polyamine aminopropyltransferase.